The primary structure comprises 396 residues: S-adenosylmethionine synthase (396 aa).

Residue His-16 participates in ATP binding. Asp-18 is a Mg(2+) binding site. Glu-44 is a binding site for K(+). L-methionine is bound by residues Glu-57 and Gln-100. The tract at residues 100-110 (QSVDIAQGVDR) is flexible loop. ATP contacts are provided by residues 165–167 (DAK), Asp-240, 246–247 (RK), Ala-263, and Lys-267. Asp-240 is an L-methionine binding site. Lys-271 contacts L-methionine.

The protein belongs to the AdoMet synthase family. As to quaternary structure, homotetramer; dimer of dimers. The cofactor is Mg(2+). It depends on K(+) as a cofactor.

The protein localises to the cytoplasm. It catalyses the reaction L-methionine + ATP + H2O = S-adenosyl-L-methionine + phosphate + diphosphate. The protein operates within amino-acid biosynthesis; S-adenosyl-L-methionine biosynthesis; S-adenosyl-L-methionine from L-methionine: step 1/1. Functionally, catalyzes the formation of S-adenosylmethionine (AdoMet) from methionine and ATP. The overall synthetic reaction is composed of two sequential steps, AdoMet formation and the subsequent tripolyphosphate hydrolysis which occurs prior to release of AdoMet from the enzyme. In Stutzerimonas stutzeri (strain A1501) (Pseudomonas stutzeri), this protein is S-adenosylmethionine synthase.